The sequence spans 471 residues: Glutamate--tRNA ligase (471 aa).

The 'HIGH' region signature appears at 9–19 (PSPTGFLHVGG). Residues cysteine 98, cysteine 100, cysteine 125, and aspartate 127 each contribute to the Zn(2+) site. The 'KMSKS' region signature appears at 237 to 241 (KLSKR). Lysine 240 provides a ligand contact to ATP.

This sequence belongs to the class-I aminoacyl-tRNA synthetase family. Glutamate--tRNA ligase type 1 subfamily. As to quaternary structure, monomer. Zn(2+) serves as cofactor.

It localises to the cytoplasm. It carries out the reaction tRNA(Glu) + L-glutamate + ATP = L-glutamyl-tRNA(Glu) + AMP + diphosphate. Functionally, catalyzes the attachment of glutamate to tRNA(Glu) in a two-step reaction: glutamate is first activated by ATP to form Glu-AMP and then transferred to the acceptor end of tRNA(Glu). The chain is Glutamate--tRNA ligase from Aeromonas salmonicida (strain A449).